The following is a 333-amino-acid chain: Electron transfer flavoprotein subunit alpha, mitochondrial (333 aa).

The N-terminal 19 residues, 1-19, are a transit peptide targeting the mitochondrion; sequence MFRAAAPGQLRRAASLLRF. The interval 20–204 is domain I; the sequence is QSTLVIAEHA…GISEWLDQKL (185 aa). Position 59 is an N6-acetyllysine; alternate (K59). N6-succinyllysine; alternate is present on K59. N6-acetyllysine is present on K62. At K69 the chain carries N6-acetyllysine; alternate. An N6-succinyllysine; alternate modification is found at K69. K75 is subject to N6-acetyllysine. K85 is subject to N6-acetyllysine; alternate. N6-succinyllysine; alternate is present on K85. T93 carries the phosphothreonine modification. Residues K101 and K139 each carry the N6-acetyllysine modification. A Phosphoserine modification is found at S140. K158 is subject to N6-acetyllysine; alternate. The residue at position 158 (K158) is an N6-succinyllysine; alternate. K164 bears the N6-acetyllysine mark. K187 carries the N6-succinyllysine modification. K203 carries the N6-acetyllysine; alternate modification. K203 is subject to N6-succinyllysine; alternate. The segment at 205 to 333 is domain II; that stretch reads TKSDRPELTG…PEMTEILKKK (129 aa). At K216 the chain carries N6-succinyllysine. Residue R223 participates in FAD binding. N6-acetyllysine; alternate is present on residues K226 and K232. 2 positions are modified to N6-succinyllysine; alternate: K226 and K232. FAD contacts are provided by residues S248, 263–266, 281–286, and N300; these read VGQT and SGAIQH. Residue K301 is modified to N6-succinyllysine. FAD is bound at residue 318–319; the sequence is DL.

This sequence belongs to the ETF alpha-subunit/FixB family. As to quaternary structure, heterodimer composed of ETFA and ETFB. Identified in a complex that contains ETFA, ETFB and ETFRF1. Interaction with ETFRF1 promotes dissociation of the bound FAD and loss of electron transfer activity. Interacts with TASOR. FAD serves as cofactor.

The protein resides in the mitochondrion matrix. In terms of biological role, heterodimeric electron transfer flavoprotein that accepts electrons from several mitochondrial dehydrogenases, including acyl-CoA dehydrogenases, glutaryl-CoA and sarcosine dehydrogenase. It transfers the electrons to the main mitochondrial respiratory chain via ETF-ubiquinone oxidoreductase (ETF dehydrogenase). Required for normal mitochondrial fatty acid oxidation and normal amino acid metabolism. The polypeptide is Electron transfer flavoprotein subunit alpha, mitochondrial (Etfa) (Rattus norvegicus (Rat)).